Consider the following 131-residue polypeptide: Lysozyme C (131 aa).

The 130-residue stretch at 2–131 (KIYEQCELAR…VSQWIKGCKL (130 aa)) folds into the C-type lysozyme domain. Cystine bridges form between cysteine 7-cysteine 129, cysteine 31-cysteine 117, cysteine 66-cysteine 82, and cysteine 78-cysteine 96. Active-site residues include glutamate 36 and aspartate 54.

It belongs to the glycosyl hydrolase 22 family. Monomer.

The protein resides in the secreted. It catalyses the reaction Hydrolysis of (1-&gt;4)-beta-linkages between N-acetylmuramic acid and N-acetyl-D-glucosamine residues in a peptidoglycan and between N-acetyl-D-glucosamine residues in chitodextrins.. In terms of biological role, lysozymes have primarily a bacteriolytic function; those in tissues and body fluids are associated with the monocyte-macrophage system and enhance the activity of immunoagents. Has strong bacteriolytic activity against M.luteus and V.cholerae, weak bacteriolytic activity against P.aeruginosa and no activity against A.hydrophila. The polypeptide is Lysozyme C (LYZ) (Pelodiscus sinensis (Chinese softshell turtle)).